The primary structure comprises 93 residues: SH3 domain-binding glutamic acid-rich-like protein 3 (93 aa).

The residue at position 2 (S2) is an N-acetylserine. The Glutaredoxin domain occupies 2 to 93 (SGLRVYSTSV…NTLQEFLKLA (92 aa)). The O-linked (GalNAc...) threonine glycan is linked to T9.

The protein belongs to the SH3BGR family. In terms of assembly, homodimer. Interacts with MYO1C (via its IQ motifs); the interaction is dependent on calcium and takes place at membrane ruffles. May be glycosylated.

It is found in the cytoplasm. The protein resides in the cytosol. The protein localises to the cell projection. Its subcellular location is the ruffle membrane. It localises to the nucleus. Its function is as follows. Could act as a modulator of glutaredoxin biological activity. May play a role in cytoskeleton organization. This chain is SH3 domain-binding glutamic acid-rich-like protein 3 (SH3BGRL3), found in Bos taurus (Bovine).